A 305-amino-acid chain; its full sequence is tRNA dimethylallyltransferase (305 aa).

Residue 14 to 21 participates in ATP binding; that stretch reads GPTTSGKT. 16–21 lines the substrate pocket; the sequence is TTSGKT. Interaction with substrate tRNA regions lie at residues 39–42, 163–167, and 243–248; these read DSAL, QRITR, and RCVGYR.

It belongs to the IPP transferase family. Monomer. Mg(2+) serves as cofactor.

The catalysed reaction is adenosine(37) in tRNA + dimethylallyl diphosphate = N(6)-dimethylallyladenosine(37) in tRNA + diphosphate. Functionally, catalyzes the transfer of a dimethylallyl group onto the adenine at position 37 in tRNAs that read codons beginning with uridine, leading to the formation of N6-(dimethylallyl)adenosine (i(6)A). This is tRNA dimethylallyltransferase from Ruthia magnifica subsp. Calyptogena magnifica.